A 577-amino-acid polypeptide reads, in one-letter code: Double-stranded RNA-binding protein Staufen homolog 1 (577 aa).

At Ser2 the chain carries N-acetylserine. Positions 34–44 are enriched in polar residues; the sequence is SIPSTTSSLPS. The interval 34 to 55 is disordered; it reads SIPSTTSSLPSENAGRPIQNSA. The DRBM 1 domain maps to 72 to 162; it reads TPTVELNALC…AAKALRILQN (91 aa). At Arg108 the chain carries Asymmetric dimethylarginine. At Arg115 the chain carries Asymmetric dimethylarginine; alternate. Arg115 is subject to Omega-N-methylarginine; alternate. The residue at position 176 (Ser176) is a Phosphoserine. In terms of domain architecture, DRBM 2 spans 184 to 251; the sequence is SEISQVFEIA…AIAVLEELKK (68 aa). Phosphoserine is present on Ser278. The 69-residue stretch at 286-354 folds into the DRBM 3 domain; sequence NPISRLAQIQ…AENMLEILGF (69 aa). The interval 360–397 is disordered; it reads QPTKPALKSEEKTPIKKPGDGRKVTFFEPGSGDENGTS. A compositionally biased stretch (basic and acidic residues) spans 366–384; it reads LKSEEKTPIKKPGDGRKVT. Residue Ser390 is modified to Phosphoserine.

In terms of assembly, binds tubulin. Binds with low affinity single-stranded RNA or DNA homopolymers. Interacts with CASC3 in an RNA-dependent manner. Identified in a mRNP complex, at least composed of DHX9, DDX3X, ELAVL1, HNRNPU, IGF2BP1, ILF3, PABPC1, PCBP2, PTBP2, STAU1, STAU2, SYNCRIP and YBX1. (Microbial infection) Interacts with HERV-K rec and gag proteins. As to quaternary structure, (Microbial infection) Interacts with HIV-1 GAG polyprotein. In terms of assembly, (Microbial infection) Interacts with influenza virus NS1 protein. (Microbial infection) Interacts with Ebola virus NP, VP30 and VP35. Widely expressed. Expressed in brain, pancreas, heart, skeletal muscles, liver, lung, kidney and placenta.

It localises to the cytoplasm. The protein localises to the rough endoplasmic reticulum. Its function is as follows. Binds double-stranded RNA (regardless of the sequence) and tubulin. May play a role in specific positioning of mRNAs at given sites in the cell by cross-linking cytoskeletal and RNA components, and in stimulating their translation at the site. (Microbial infection) Plays a role in virus particles production of many viruses including of HIV-1, HERV-K, ebola virus and influenza virus. Acts by interacting with various viral proteins involved in particle budding process. In Homo sapiens (Human), this protein is Double-stranded RNA-binding protein Staufen homolog 1 (STAU1).